The sequence spans 142 residues: Small ribosomal subunit protein uS12 (142 aa).

This sequence belongs to the universal ribosomal protein uS12 family.

This Tetrahymena thermophila protein is Small ribosomal subunit protein uS12.